Consider the following 168-residue polypeptide: MFRSIAVLSALLFAFASAKTCKYDSSDFEVYWRFANNSINMQFMNTDIKNNEWTGVGFGDDKNNFVGVFFMVSNNQVTVRTGSTTQHGPPTFTQSGTNTASVSTQALNYFPEDKTMSAVVQIPIQFNGRSLQSCQKWRFVKSGKIENGQLTRNDKSPKEKKVCPMECN.

Residues 1–18 (MFRSIAVLSALLFAFASA) form the signal peptide. In terms of domain architecture, DOMON spans 26 to 143 (SDFEVYWRFA…CQKWRFVKSG (118 aa)). A glycan (N-linked (GlcNAc...) asparagine) is linked at asparagine 36. Residues 148–168 (GQLTRNDKSPKEKKVCPMECN) form a disordered region. Positions 152-168 (RNDKSPKEKKVCPMECN) are enriched in basic and acidic residues.

It is found in the secreted. The polypeptide is DOMON domain-containing protein Y73F4A.2 (Caenorhabditis elegans).